A 122-amino-acid chain; its full sequence is Large ribosomal subunit protein uL14 (122 aa).

This sequence belongs to the universal ribosomal protein uL14 family. As to quaternary structure, part of the 50S ribosomal subunit. Forms a cluster with proteins L3 and L19. In the 70S ribosome, L14 and L19 interact and together make contacts with the 16S rRNA in bridges B5 and B8.

In terms of biological role, binds to 23S rRNA. Forms part of two intersubunit bridges in the 70S ribosome. The polypeptide is Large ribosomal subunit protein uL14 (Borreliella afzelii (strain PKo) (Borrelia afzelii)).